The sequence spans 789 residues: Probable phosphoketolase 1 (789 aa).

This sequence belongs to the XFP family. The cofactor is thiamine diphosphate.

This chain is Probable phosphoketolase 1, found in Rhizobium meliloti (strain 1021) (Ensifer meliloti).